Here is a 294-residue protein sequence, read N- to C-terminus: Ethylene-inducing xylanase 3 (294 aa).

The N-terminal stretch at 1–19 is a signal peptide; that stretch reads MVCFSSLFVAASAIAGVFA. The GH11 domain occupies 31–226; that stretch reads QSTPSSQGTH…SSGSARINVA (196 aa). Glutamate 122 serves as the catalytic Nucleophile. Glutamate 213 (proton donor) is an active-site residue. The CBM1 domain maps to 259–294; that stretch reads SCAARWGQCGGSGWNGATCCSAGTCQAQNQWYSQCL.

The protein belongs to the glycosyl hydrolase 11 (cellulase G) family.

It catalyses the reaction Endohydrolysis of (1-&gt;4)-beta-D-xylosidic linkages in xylans.. It participates in glycan degradation; xylan degradation. Its function is as follows. Endo-1,4-beta-xylanase involved in the hydrolysis of xylan, a major structural heterogeneous polysaccharide found in plant biomass representing the second most abundant polysaccharide in the biosphere, after cellulose. Exhibits immunity-inducing activity in Nicotiana benthamiana. Can induce strong oxidative burst, activate the expression of defense-related genes, and increase resistance against oomycete and fungal pathogens in N.benthamiana. In Verticillium dahliae (strain VdLs.17 / ATCC MYA-4575 / FGSC 10137) (Verticillium wilt), this protein is Ethylene-inducing xylanase 3.